Reading from the N-terminus, the 388-residue chain is Sulfate adenylyltransferase (388 aa).

The protein belongs to the sulfate adenylyltransferase family.

The enzyme catalyses sulfate + ATP + H(+) = adenosine 5'-phosphosulfate + diphosphate. The protein operates within sulfur metabolism; hydrogen sulfide biosynthesis; sulfite from sulfate: step 1/3. In Trichodesmium erythraeum (strain IMS101), this protein is Sulfate adenylyltransferase.